We begin with the raw amino-acid sequence, 228 residues long: Cytidylate kinase (228 aa).

G11–T19 contacts ATP.

Belongs to the cytidylate kinase family. Type 1 subfamily.

It localises to the cytoplasm. It catalyses the reaction CMP + ATP = CDP + ADP. The enzyme catalyses dCMP + ATP = dCDP + ADP. The sequence is that of Cytidylate kinase from Limosilactobacillus reuteri (strain DSM 20016) (Lactobacillus reuteri).